Reading from the N-terminus, the 238-residue chain is Octanoyltransferase (238 aa).

One can recognise a BPL/LPL catalytic domain in the interval 40 to 220 (AGGSDALLLL…RVCDALDGRL (181 aa)). Residues 78 to 85 (RGGKITWH), 150 to 152 (AIG), and 163 to 165 (GFA) contribute to the substrate site. Cys-181 functions as the Acyl-thioester intermediate in the catalytic mechanism.

It belongs to the LipB family.

The protein localises to the cytoplasm. The enzyme catalyses octanoyl-[ACP] + L-lysyl-[protein] = N(6)-octanoyl-L-lysyl-[protein] + holo-[ACP] + H(+). It functions in the pathway protein modification; protein lipoylation via endogenous pathway; protein N(6)-(lipoyl)lysine from octanoyl-[acyl-carrier-protein]: step 1/2. Functionally, catalyzes the transfer of endogenously produced octanoic acid from octanoyl-acyl-carrier-protein onto the lipoyl domains of lipoate-dependent enzymes. Lipoyl-ACP can also act as a substrate although octanoyl-ACP is likely to be the physiological substrate. This is Octanoyltransferase from Mycobacterium sp. (strain JLS).